A 244-amino-acid chain; its full sequence is DNA repair protein RecO (244 aa).

Belongs to the RecO family.

In terms of biological role, involved in DNA repair and RecF pathway recombination. The protein is DNA repair protein RecO of Polynucleobacter asymbioticus (strain DSM 18221 / CIP 109841 / QLW-P1DMWA-1) (Polynucleobacter necessarius subsp. asymbioticus).